The chain runs to 397 residues: Elongation factor Tu (397 aa).

In terms of domain architecture, tr-type G spans 10–206; sequence KPHVNVGTIG…TMDTYFPQPE (197 aa). Residues 19–26 are G1; that stretch reads GHVDHGKT. A GTP-binding site is contributed by 19-26; the sequence is GHVDHGKT. A Mg(2+)-binding site is contributed by Thr26. Residues 60–64 form a G2 region; that stretch reads GITIA. The tract at residues 81–84 is G3; sequence DCPG. GTP is bound by residues 81 to 85 and 136 to 139; these read DCPGH and NKAD. A G4 region spans residues 136-139; it reads NKAD. Positions 174 to 176 are G5; that stretch reads SAL.

Belongs to the TRAFAC class translation factor GTPase superfamily. Classic translation factor GTPase family. EF-Tu/EF-1A subfamily. Monomer.

Its subcellular location is the cytoplasm. It catalyses the reaction GTP + H2O = GDP + phosphate + H(+). In terms of biological role, GTP hydrolase that promotes the GTP-dependent binding of aminoacyl-tRNA to the A-site of ribosomes during protein biosynthesis. The protein is Elongation factor Tu of Coxiella burnetii (strain Dugway 5J108-111).